We begin with the raw amino-acid sequence, 985 residues long: Regulator of telomere elongation helicase 1 homolog (985 aa).

The 297-residue stretch at 7–303 (AGIPVHFPFE…QDMAGDEPKD (297 aa)) folds into the Helicase ATP-binding domain. 42 to 49 (SPTGTGKT) is a binding site for ATP. 4 residues coordinate [4Fe-4S] cluster: Cys-146, Cys-164, Cys-173, and Cys-209. The DEAH box signature appears at 252–255 (DEAH). Position 874 is a phosphothreonine (Thr-874).

Belongs to the helicase family. RAD3/XPD subfamily.

The protein localises to the nucleus. The enzyme catalyses ATP + H2O = ADP + phosphate + H(+). In terms of biological role, a probable ATP-dependent DNA helicase implicated in DNA repair and the maintenance of genomic stability. Acts as an anti-recombinase to counteract toxic recombination and limit crossover during meiosis. Regulates meiotic recombination and crossover homeostasis by physically dissociating strand invasion events and thereby promotes noncrossover repair by meiotic synthesis dependent strand annealing (SDSA) as well as disassembly of D loop recombination intermediates. The chain is Regulator of telomere elongation helicase 1 homolog from Drosophila erecta (Fruit fly).